The primary structure comprises 367 residues: Terpene cyclase verU1 (367 aa).

Residues 8 to 28 (IRCSLLLLGLVGIYTVWISSF) traverse the membrane as a helical segment. Asn-50 carries an N-linked (GlcNAc...) asparagine glycan. 8 consecutive transmembrane segments (helical) span residues 57–77 (FTGI…YWPV), 85–105 (LSLI…LFAL), 120–140 (MAMF…PIYC), 169–189 (CLLG…PAVV), 197–217 (IIAL…LTHL), 239–259 (ISAM…SLLA), 292–312 (FQWD…GLHI), and 327–347 (LIPE…AALY). Asn-352 carries N-linked (GlcNAc...) asparagine glycosylation.

Belongs to the membrane-bound ascI terpene cyclase family.

The protein resides in the membrane. It functions in the pathway secondary metabolite biosynthesis; terpenoid biosynthesis. It participates in mycotoxin biosynthesis. Functionally, terpene cyclase; part of the gene cluster that mediates the biosynthesis of the neurotoxin verrucosidin, a methylated alpha-pyrone polyketide that inhibits oxidative phosphorylation in mitochondria and thereby causes neurological diseases. The carbon backbone of verrucosidin is synthesized by the HR-PKS verA, and further modified by the other verrucodidin cluster enzymes. The protein is Terpene cyclase verU1 of Penicillium polonicum.